We begin with the raw amino-acid sequence, 473 residues long: UDP-glycosyltransferase 71A27 (473 aa).

Histidine 15 functions as the Proton acceptor in the catalytic mechanism. An an anthocyanidin-binding site is contributed by histidine 15. Aspartate 117 acts as the Charge relay in catalysis. Positions 345, 347, 362, 365, 366, 367, and 370 each coordinate UDP-alpha-D-glucose. An anthocyanidin is bound at residue glycine 385. Residues glutamate 386 and glutamine 387 each coordinate UDP-alpha-D-glucose.

The protein belongs to the UDP-glycosyltransferase family.

The catalysed reaction is (20S)-protopanaxadiol + UDP-alpha-D-glucose = (20S)-ginsenoside C-K + UDP + H(+). It participates in secondary metabolite biosynthesis; terpenoid biosynthesis. Component of the triterpene saponins (e.g. PPD-type ginsenosides or panaxosides) biosynthetic pathways. Glycosyltransferase that catalyzes the biosynthesis of compound K from protopanaxadiol (PPD). The polypeptide is UDP-glycosyltransferase 71A27 (Panax ginseng (Korean ginseng)).